The chain runs to 732 residues: Exonuclease 1 (732 aa).

The interval 1-99 is N-domain; the sequence is MGITGLIPFV…KRRRDSRKQS (99 aa). Aspartate 30, aspartate 78, glutamate 150, aspartate 152, aspartate 171, aspartate 173, and aspartate 226 together coordinate Mg(2+). An I-domain region spans residues 138 to 230; it reads RSRNVDCIVA…ILSGCDYLDS (93 aa). Disordered regions lie at residues 422–471, 524–625, and 661–716; these read YSFK…QRSP, DEQT…TNST, and SCSS…VSQN. Residues serine 431 and serine 433 each carry the phosphoserine modification. Basic and acidic residues predominate over residues 432–442; sequence PSREDSVDQER. The residue at position 443 (threonine 443) is a Phosphothreonine. Residue serine 447 is modified to Phosphoserine. 2 stretches are compositionally biased toward basic and acidic residues: residues 457–467 and 525–537; these read FAKERTGEEAN and EQTR…LRDT. Composition is skewed to polar residues over residues 572 to 593 and 608 to 625; these read RCSS…SLLE and DLNN…TNST. Low complexity predominate over residues 661–677; that stretch reads SCSSDQRASSTSSSSQQ. Residues 703–716 show a composition bias toward polar residues; sequence KSRTNGKLGAVSQN.

Belongs to the XPG/RAD2 endonuclease family. EXO1 subfamily. Requires Mg(2+) as cofactor. Specifically expressed in the female germline.

The protein resides in the nucleus. Functionally, 5'-&gt;3' double-stranded DNA exonuclease which may also contain a cryptic 3'-&gt;5' double-stranded DNA exonuclease activity. Also exhibits endonuclease activity against 5'-overhanging flap structures similar to those generated by displacement synthesis when DNA polymerase encounters the 5'-end of a downstream Okazaki fragment. Required for DNA mismatch repair (MMR). The sequence is that of Exonuclease 1 (tos) from Drosophila melanogaster (Fruit fly).